Reading from the N-terminus, the 804-residue chain is Mechanosensitive cation channel TMEM63A (804 aa).

Over 1–51 the chain is Extracellular; sequence MTSSPFLDPWPSKAVFVRERLGLGERPNDSYCYNSAKNSTVLQGVTFGGIP. Asn-38 carries an N-linked (GlcNAc...) asparagine glycan. A helical transmembrane segment spans residues 52-74; sequence TVLLLDVSCFLFLILVFSIIRRR. Residues 75–133 lie on the Cytoplasmic side of the membrane; that stretch reads FWDYGRIALVSEAGSEARFQRLSSSSSGQQDFENELGCCPWLTAIFRLHDDQILEWCGE. The helical transmembrane segment at 134–166 threads the bilayer; the sequence is DAIHYLSFQRHIIFLLVVISFLSLCVILPVNLS. Over 167-190 the chain is Extracellular; sequence GDLLGKDPYSFGRTTIANLQTDND. A helical membrane pass occupies residues 191 to 216; that stretch reads LLWLHTVFSVIYLFLTVGFMWHHTRS. At 217–415 the chain is on the cytoplasmic side; sequence IRYKEESLVR…CWKNLSIQGV (199 aa). The segment at 218–413 is intracellular linker IL2; confers mechanosensitivity; sequence RYKEESLVRQ…DICWKNLSIQ (196 aa). The chain crosses the membrane as a helical span at residues 416–443; that stretch reads RWWLQWLGINFSLFVVLFFLTTPSIIMS. Over 444-461 the chain is Extracellular; the sequence is TMDKFNVTKPIHALNNPV. Asn-449 carries N-linked (GlcNAc...) asparagine glycosylation. The chain crosses the membrane as a helical span at residues 462 to 489; it reads ISQFFPTLLLWSFSALLPSIVYYSTLLE. The Cytoplasmic portion of the chain corresponds to 490-494; that stretch reads SHWTR. Residues 495 to 531 form a helical membrane-spanning segment; that stretch reads SGENRIMVSKVYIFLIFMVLILPSLGLTSLDFFFRWL. Residues 532–553 lie on the Extracellular side of the membrane; the sequence is FDKTSSETSIRLECVFLPDQGA. Residues 554 to 585 traverse the membrane as a helical segment; that stretch reads FFVNYVIASAFIGSGMELLRLPGLILYTFRMI. Positions 554–585 are gating helix; that stretch reads FFVNYVIASAFIGSGMELLRLPGLILYTFRMI. Residues 586-605 are Cytoplasmic-facing; sequence MAKTAADRRNVKQNQAFEYE. A helical transmembrane segment spans residues 606–623; sequence FGAMYAWMLCVFTVIMAY. At 624-627 the chain is on the extracellular side; the sequence is SITC. The helical transmembrane segment at 628-650 threads the bilayer; sequence PIIVPFGLIYILLKHMVDRHNLY. The Cytoplasmic portion of the chain corresponds to 651–660; sequence FAYLPAKLEK. A helical membrane pass occupies residues 661–688; that stretch reads RIHFAAVNQALAAPILCLFWLFFFSFLR. The Extracellular portion of the chain corresponds to 689–693; it reads LGLTA. A helical transmembrane segment spans residues 694–708; that stretch reads PATLFTFLVVLLTIL. Topologically, residues 709 to 804 are cytoplasmic; sequence ACLLYTCFGC…GTAAYAYQES (96 aa). Phosphoserine is present on Ser-738.

This sequence belongs to the CSC1 (TC 1.A.17) family. Monomer. In terms of processing, N-Glycosylated.

It is found in the lysosome membrane. Its subcellular location is the early endosome membrane. It localises to the cell membrane. The enzyme catalyses Ca(2+)(in) = Ca(2+)(out). Its function is as follows. Mechanosensitive cation channel with low conductance and high activation threshold. In contrast to TMEM63B, does not show phospholipid scramblase activity. Acts as a regulator of lysosomal morphology by mediating lysosomal mechanosensitivity. Important for the baby's first breath and respiration throughout life. Upon lung inflation conducts cation currents in alveolar type 1 and 2 cells triggering lamellar body exocytosis and surfactant secretion into airspace. Also acts as an osmosensitive cation channel preferentially activated by hypotonic stress. The polypeptide is Mechanosensitive cation channel TMEM63A (Mus musculus (Mouse)).